Here is a 268-residue protein sequence, read N- to C-terminus: Ethylene-responsive transcription factor ERN1 (268 aa).

Residues 1 to 21 (MEIQFQQPNMQNQKAGISVTN) show a composition bias toward polar residues. Residues 1–36 (MEIQFQQPNMQNQKAGISVTNKGGKFKGRNRNSNNT) are disordered. A DNA-binding region (AP2/ERF) is located at residues 38–95 (KFVGVRQRPSGRWVAEIKDTTQKIRMWLGTFETAEEAARAYDEAACLLRGSNTRTNFI). Residues 114–154 (NRKGDKKQEDGAVASAPSNSKTTISNTSTITSNDDNKESTL) are disordered. A compositionally biased stretch (low complexity) spans 131-146 (SNSKTTISNTSTITSN).

This sequence belongs to the AP2/ERF transcription factor family. ERF subfamily. Expressed in roots, root hairs and leaves. Expressed in root epidermis and root hairs.

The protein resides in the nucleus. Its function is as follows. Transcription factor involved in symbiotic nodule signaling in response to rhizobial Nod factors (NFs). Binds to the GCC-box (NF-responsive box) of ENOD11 promoter. Acts as a transcriptional activator of NF-responsive box-containing target gene promoters in root hairs. Functions as a transcriptional regulator required for root infection by symbiotic rhizobia, infection thread (IT) formation and maintenance, and nodule development. Necessary for NF-induced gene expression and spontaneous nodulation activated by CCAMK. Functions downstream of CCAMK to activate nodulation gene expression. Involved in early stages of root nodule development. Functions redundantly with ERN2. Is essential with ERN2 for the initiation of root hair infection, and nodule organogenesis and development. Required for accurate expression of the NF signaling genes ENOD11 and ENOD12. This is Ethylene-responsive transcription factor ERN1 from Medicago truncatula (Barrel medic).